We begin with the raw amino-acid sequence, 686 residues long: Chondroitin proteoglycan 1 (686 aa).

The N-terminal stretch at Met1–Ala18 is a signal peptide. A glycan (N-linked (GlcNAc...) asparagine) is linked at Asn46. Residues Asp63–Gly120 form the Chitin-binding type-2 1 domain. A disulfide bridge links Cys96 with Cys109. Residue Asn143 is glycosylated (N-linked (GlcNAc...) asparagine). Residues Asp228 to Asn285 enclose the Chitin-binding type-2 2 domain. An intrachain disulfide couples Cys261 to Cys274. The disordered stretch occupies residues Gln284–Gly312. 3 N-linked (GlcNAc...) asparagine glycosylation sites follow: Asn285, Asn635, and Asn664. The segment at Lys658 to His686 is disordered.

In terms of biological role, required for polar body extrusion during cytokinesis in embryo development. Affects cortical granule size. Shown to have roles in meiotic chromosome segregation, osmotic barrier function and polarization in conjunction with cpg-2. Binds chitin. The chain is Chondroitin proteoglycan 1 (cpg-1) from Caenorhabditis briggsae.